Reading from the N-terminus, the 126-residue chain is Probable cystatin-16 (126 aa).

An N-terminal signal peptide occupies residues 1–20 (MFLKATLLLGLAVLGMHVWA). An intrachain disulfide couples Cys-84 to Cys-94. Asn-106 is a glycosylation site (N-linked (GlcNAc...) asparagine).

It belongs to the cystatin family.

The protein resides in the secreted. This is Probable cystatin-16 from Bos taurus (Bovine).